We begin with the raw amino-acid sequence, 75 residues long: MVKFMPTTYEIIIYGRIQHVGFRERIENLGHALGIDGIVYNYEDGTVRILANFPSERKKKLFKDKTNFWRVRKCK.

The Acylphosphatase-like domain maps to 8–75; it reads TYEIIIYGRI…TNFWRVRKCK (68 aa).

In Methanocaldococcus jannaschii (strain ATCC 43067 / DSM 2661 / JAL-1 / JCM 10045 / NBRC 100440) (Methanococcus jannaschii), this protein is Acylphosphatase-like protein MJ1405.